The chain runs to 635 residues: Protein OPG056 (635 aa).

Belongs to the orthopoxvirus OPG056 family. In terms of assembly, interacts with protein OPG164. Interacts with protein OPG064.

The protein resides in the virion membrane. It localises to the host endosome. In terms of biological role, plays a role in intracellular enveloped virus (IEV) transport to the cell surface through microtubule transport. Together with protein OPG064, forms a complex that interacts with host KLC2 (kinesin light chain isoform 2) to engage the kinesin-1 complex and thereby promote IEV trafficking. In Homo sapiens (Human), this protein is Protein OPG056 (OPG056).